Consider the following 206-residue polypeptide: Thymidylate kinase (206 aa).

10-17 (GIDGAGKS) serves as a coordination point for ATP.

The protein belongs to the thymidylate kinase family.

The enzyme catalyses dTMP + ATP = dTDP + ADP. Functionally, phosphorylation of dTMP to form dTDP in both de novo and salvage pathways of dTTP synthesis. The chain is Thymidylate kinase (tmk) from Neisseria meningitidis serogroup A / serotype 4A (strain DSM 15465 / Z2491).